Here is a 531-residue protein sequence, read N- to C-terminus: uncharacterized protein (531 aa).

The N-terminal stretch at 1–22 is a signal peptide; that stretch reads MRLQFKLLGFLTLLGTSTILSA. The N-palmitoyl cysteine moiety is linked to residue C23. C23 carries S-diacylglycerol cysteine lipidation. Residues 31 to 51 form a disordered region; it reads EPNNIEESGPITPTTPTTDVP. Residues 40-51 show a composition bias toward low complexity; the sequence is PITPTTPTTDVP.

It belongs to the MG067/MG068/MG395 family.

Its subcellular location is the cell membrane. This is an uncharacterized protein from Mycoplasma pneumoniae (strain ATCC 29342 / M129 / Subtype 1) (Mycoplasmoides pneumoniae).